The sequence spans 105 residues: Small ribosomal subunit protein uS10 (105 aa).

Belongs to the universal ribosomal protein uS10 family. Part of the 30S ribosomal subunit.

Functionally, involved in the binding of tRNA to the ribosomes. This chain is Small ribosomal subunit protein uS10, found in Cyanothece sp. (strain PCC 7425 / ATCC 29141).